Reading from the N-terminus, the 126-residue chain is Phosphoribosyl-AMP cyclohydrolase (126 aa).

Aspartate 76 is a binding site for Mg(2+). A Zn(2+)-binding site is contributed by cysteine 77. The Mg(2+) site is built by aspartate 78 and aspartate 80. Zn(2+) is bound by residues cysteine 94 and cysteine 101.

It belongs to the PRA-CH family. Homodimer. Mg(2+) serves as cofactor. The cofactor is Zn(2+).

Its subcellular location is the cytoplasm. The catalysed reaction is 1-(5-phospho-beta-D-ribosyl)-5'-AMP + H2O = 1-(5-phospho-beta-D-ribosyl)-5-[(5-phospho-beta-D-ribosylamino)methylideneamino]imidazole-4-carboxamide. Its pathway is amino-acid biosynthesis; L-histidine biosynthesis; L-histidine from 5-phospho-alpha-D-ribose 1-diphosphate: step 3/9. Catalyzes the hydrolysis of the adenine ring of phosphoribosyl-AMP. The polypeptide is Phosphoribosyl-AMP cyclohydrolase (Vesicomyosocius okutanii subsp. Calyptogena okutanii (strain HA)).